The sequence spans 259 residues: Bacillaene synthase dehydratase PksH (259 aa).

Active-site residues include Asp68 and Glu137.

Belongs to the enoyl-CoA hydratase/isomerase family.

It localises to the cytoplasm. Its pathway is antibiotic biosynthesis; bacillaene biosynthesis. Functionally, involved in some intermediate steps for the synthesis of the antibiotic polyketide bacillaene which is involved in secondary metabolism. Catalyzes the dehydration of the (S)-3-hydroxy-3-methylglutaryl group tethered to PksL to a 3-methylglutaconyl moiety. This Bacillus subtilis (strain 168) protein is Bacillaene synthase dehydratase PksH (pksH).